A 243-amino-acid polypeptide reads, in one-letter code: Biosynthetic peptidoglycan transglycosylase (243 aa).

Residues 22 to 42 (LIVLLVLALMSVLQVIVFRFV) traverse the membrane as a helical segment.

Belongs to the glycosyltransferase 51 family.

Its subcellular location is the cell inner membrane. The enzyme catalyses [GlcNAc-(1-&gt;4)-Mur2Ac(oyl-L-Ala-gamma-D-Glu-L-Lys-D-Ala-D-Ala)](n)-di-trans,octa-cis-undecaprenyl diphosphate + beta-D-GlcNAc-(1-&gt;4)-Mur2Ac(oyl-L-Ala-gamma-D-Glu-L-Lys-D-Ala-D-Ala)-di-trans,octa-cis-undecaprenyl diphosphate = [GlcNAc-(1-&gt;4)-Mur2Ac(oyl-L-Ala-gamma-D-Glu-L-Lys-D-Ala-D-Ala)](n+1)-di-trans,octa-cis-undecaprenyl diphosphate + di-trans,octa-cis-undecaprenyl diphosphate + H(+). The protein operates within cell wall biogenesis; peptidoglycan biosynthesis. In terms of biological role, peptidoglycan polymerase that catalyzes glycan chain elongation from lipid-linked precursors. The chain is Biosynthetic peptidoglycan transglycosylase from Xylella fastidiosa (strain 9a5c).